Reading from the N-terminus, the 264-residue chain is Thymidylate synthase (264 aa).

Arg21 is a binding site for dUMP. His51 contributes to the (6R)-5,10-methylene-5,6,7,8-tetrahydrofolate binding site. Arg126–Arg127 provides a ligand contact to dUMP. The active-site Nucleophile is the Cys146. DUMP-binding positions include Arg166–Asp169, Asn177, and His207–Tyr209. Asp169 lines the (6R)-5,10-methylene-5,6,7,8-tetrahydrofolate pocket. (6R)-5,10-methylene-5,6,7,8-tetrahydrofolate is bound at residue Ala263.

Belongs to the thymidylate synthase family. Bacterial-type ThyA subfamily. Homodimer.

Its subcellular location is the cytoplasm. The enzyme catalyses dUMP + (6R)-5,10-methylene-5,6,7,8-tetrahydrofolate = 7,8-dihydrofolate + dTMP. It functions in the pathway pyrimidine metabolism; dTTP biosynthesis. Catalyzes the reductive methylation of 2'-deoxyuridine-5'-monophosphate (dUMP) to 2'-deoxythymidine-5'-monophosphate (dTMP) while utilizing 5,10-methylenetetrahydrofolate (mTHF) as the methyl donor and reductant in the reaction, yielding dihydrofolate (DHF) as a by-product. This enzymatic reaction provides an intracellular de novo source of dTMP, an essential precursor for DNA biosynthesis. The sequence is that of Thymidylate synthase from Shewanella baltica (strain OS185).